The primary structure comprises 131 residues: Small ribosomal subunit protein uS8 (131 aa).

Belongs to the universal ribosomal protein uS8 family. In terms of assembly, part of the 30S ribosomal subunit. Contacts proteins S5 and S12.

In terms of biological role, one of the primary rRNA binding proteins, it binds directly to 16S rRNA central domain where it helps coordinate assembly of the platform of the 30S subunit. This Aromatoleum aromaticum (strain DSM 19018 / LMG 30748 / EbN1) (Azoarcus sp. (strain EbN1)) protein is Small ribosomal subunit protein uS8.